Reading from the N-terminus, the 585-residue chain is Testis-specific serine kinase substrate (585 aa).

Over residues 91–108 (EPDSSGTDSTTEDSGPLA) the composition is skewed to low complexity. A disordered region spans residues 91–125 (EPDSSGTDSTTEDSGPLALPGPPASPTTPWAPEDP). S224 is subject to Phosphoserine. Disordered regions lie at residues 264–312 (HGLS…SEQE) and 559–585 (LEGS…GSEQ). S281 carries the phosphoserine; by TSSK1 and TSSK2 modification. S309 carries the phosphoserine modification.

In terms of processing, phosphorylated on serine residue(s) by STK22A/TSSK1 and STK22B/TSSK2. Testis specific.

Its subcellular location is the cytoplasm. The protein localises to the cytoskeleton. The protein resides in the microtubule organizing center. It is found in the centrosome. It localises to the centriole. Its subcellular location is the cytoplasmic vesicle. The protein localises to the secretory vesicle. The protein resides in the acrosome. In terms of biological role, may play a role in testicular physiology, most probably in the process of spermatogenesis or spermatid development. In Mus musculus (Mouse), this protein is Testis-specific serine kinase substrate (Tsks).